A 207-amino-acid polypeptide reads, in one-letter code: MSTPHWFDQGSLVLASNNKGKVAEFEKLFEQLKLPVEIIPQGRLNIPDAIEDGLSFIENAIIKARHASKISGKPAMADDSGICVPVLGGAPGIYSARYAGEHGDDAANNAKLLNDLLPFRKNGEVIEGMFVCVLALVTHAEDPLPQIFQGIWHGEILEAPRGENGFGYDPLFWLPELQVSSAELSKEEKNKISHRGQAMQLFRESLV.

Position 16 to 21 (16 to 21 (SNNKGK)) interacts with substrate. The active-site Proton acceptor is the aspartate 79. Aspartate 79 lines the Mg(2+) pocket. Substrate is bound by residues serine 80, 166–169 (FGYD), lysine 189, and 194–195 (HR).

The protein belongs to the HAM1 NTPase family. In terms of assembly, homodimer. Requires Mg(2+) as cofactor.

It carries out the reaction XTP + H2O = XMP + diphosphate + H(+). It catalyses the reaction dITP + H2O = dIMP + diphosphate + H(+). The enzyme catalyses ITP + H2O = IMP + diphosphate + H(+). In terms of biological role, pyrophosphatase that catalyzes the hydrolysis of nucleoside triphosphates to their monophosphate derivatives, with a high preference for the non-canonical purine nucleotides XTP (xanthosine triphosphate), dITP (deoxyinosine triphosphate) and ITP. Seems to function as a house-cleaning enzyme that removes non-canonical purine nucleotides from the nucleotide pool, thus preventing their incorporation into DNA/RNA and avoiding chromosomal lesions. This Acinetobacter baumannii (strain ATCC 17978 / DSM 105126 / CIP 53.77 / LMG 1025 / NCDC KC755 / 5377) protein is dITP/XTP pyrophosphatase.